Consider the following 213-residue polypeptide: MGHLDLAALREEYARAGLDEADLAPDPIAMFDRWMGEAHDAIRHDANAMVLSTVGPDLAPSSRMLLLKGVAEDGFVFFTNTASLKGHELAANPRCSLLFPWHPLERQVRVDGVAAPLPRADVEAYFASRPRASQLGAWASHQSEVVSGRAELEAAYAAAEVRYPDQVPTPEEWGGYVVRPEVVEFWQGRTGRLHDRLRYRRTPGGWVTERLAP.

Residues 10-13 (REEY) and Lys68 each bind substrate. FMN-binding positions include 63-68 (RMLLLK), 78-79 (FT), Lys85, and Gln107. Residues Tyr125, Arg129, and Ser133 each contribute to the substrate site. Residues 142 to 143 (QS) and Trp186 contribute to the FMN site. A substrate-binding site is contributed by 192 to 194 (RLH). Arg196 provides a ligand contact to FMN.

The protein belongs to the pyridoxamine 5'-phosphate oxidase family. In terms of assembly, homodimer. FMN serves as cofactor.

It catalyses the reaction pyridoxamine 5'-phosphate + O2 + H2O = pyridoxal 5'-phosphate + H2O2 + NH4(+). It carries out the reaction pyridoxine 5'-phosphate + O2 = pyridoxal 5'-phosphate + H2O2. The protein operates within cofactor metabolism; pyridoxal 5'-phosphate salvage; pyridoxal 5'-phosphate from pyridoxamine 5'-phosphate: step 1/1. It functions in the pathway cofactor metabolism; pyridoxal 5'-phosphate salvage; pyridoxal 5'-phosphate from pyridoxine 5'-phosphate: step 1/1. In terms of biological role, catalyzes the oxidation of either pyridoxine 5'-phosphate (PNP) or pyridoxamine 5'-phosphate (PMP) into pyridoxal 5'-phosphate (PLP). The polypeptide is Pyridoxine/pyridoxamine 5'-phosphate oxidase (Nocardioides sp. (strain ATCC BAA-499 / JS614)).